The primary structure comprises 411 residues: Methyl-CpG-binding domain protein 2 (411 aa).

The required for interaction with DHX9 and PRMT5 stretch occupies residues 1–149; the sequence is MRAHPGGGRC…GPRATESGKR (149 aa). A disordered region spans residues 1-158; it reads MRAHPGGGRC…RMDCPALPPG (158 aa). Over residues 77 to 95 the composition is skewed to basic residues; it reads GRGRGRGRGRGRGRGRGRG. Residues 98–121 are compositionally biased toward gly residues; sequence PSGGSGLGGDGGGCGGGGSGGGGA. The region spanning 145–213 is the MBD domain; that stretch reads ESGKRMDCPA…SSFDFRTGKM (69 aa). S181 carries the phosphoserine modification. Positions 214-241 are disordered; sequence MPSKLQKNKQRLRNDPLNQNKGKPDLNT. Residues 229 to 241 show a composition bias toward polar residues; it reads PLNQNKGKPDLNT. S407 is subject to Phosphoserine.

As to quaternary structure, heterodimer with MBD3 (via N-terminus). Component of the MeCP1 complex that contains HDAC1 and HDAC2. Component of the nucleosome remodeling and deacetylase (NuRD) repressor complex, composed of core proteins MTA1, MTA2, MTA3, RBBP4, RBBP7, HDAC1, HDAC2, MBD2, MBD3, and peripherally associated proteins CDK2AP1, CDK2AP2, GATAD2A, GATAD2B, CHD3, CHD4 and CHD5. The exact stoichiometry of the NuRD complex is unknown, and some subunits such as MBD2 and MBD3, GATAD2A and GATAD2B, and CHD3, CHD4 and CHD5 define mutually exclusive NuRD complexes. Interacts with CDK2AP1. Interacts with DHX9. Interacts with DNMT1. Interacts with GATAD2A/p66-alpha. Interacts with GATAD2B/p66-beta. Interacts with GPN1. Interacts with MIZF. Interacts with PRMT5. Interacts with SIN3A. Interacts with SPHK2. Highly expressed in brain, heart, kidney, stomach, testis and placenta.

The protein localises to the nucleus. Its subcellular location is the chromosome. Binds CpG islands in promoters where the DNA is methylated at position 5 of cytosine within CpG dinucleotides. Binds hemimethylated DNA as well. Recruits histone deacetylases and DNA methyltransferases to chromatin. Acts as a component of the histone deacetylase NuRD complex which participates in the remodeling of chromatin. Acts as a transcriptional repressor and plays a role in gene silencing. Functions as a scaffold protein, targeting GATAD2A and GATAD2B to chromatin to promote repression. May enhance the activation of some unmethylated cAMP-responsive promoters. The sequence is that of Methyl-CpG-binding domain protein 2 from Homo sapiens (Human).